Here is a 288-residue protein sequence, read N- to C-terminus: MALFRKKDKYIRITPNNSLKGSVSHNVPEVPDELFAKCPACKHMIYKKDLGLAKICPTCSYNFRISAQERLTLTVDEGSFQELFTSIETKDPLRFPGYQEKLQKAKEITGLHEAVLTGKAMVKGQQIALAIMDSHFIMASMGTVVGEKITRLFELAIEENLPVVIFTASGGARMQEGIMSLMQMAKVSAAVKRHSNAGLFYLTILTDPTTGGVTASFAMEGDIILAEPQSLVGFAGRRVIETTVRENLPDNFQKAEFLQDHGFVDAIVKRTELRDKIAHLVSFHGGGQ.

The CoA carboxyltransferase N-terminal domain maps to Leu-34–Gln-288. Residues Cys-38, Cys-41, Cys-56, and Cys-59 each contribute to the Zn(2+) site. The C4-type zinc-finger motif lies at Cys-38 to Cys-59.

The protein belongs to the AccD/PCCB family. As to quaternary structure, acetyl-CoA carboxylase is a heterohexamer composed of biotin carboxyl carrier protein (AccB), biotin carboxylase (AccC) and two subunits each of ACCase subunit alpha (AccA) and ACCase subunit beta (AccD). Requires Zn(2+) as cofactor.

It is found in the cytoplasm. The catalysed reaction is N(6)-carboxybiotinyl-L-lysyl-[protein] + acetyl-CoA = N(6)-biotinyl-L-lysyl-[protein] + malonyl-CoA. Its pathway is lipid metabolism; malonyl-CoA biosynthesis; malonyl-CoA from acetyl-CoA: step 1/1. Functionally, component of the acetyl coenzyme A carboxylase (ACC) complex. Biotin carboxylase (BC) catalyzes the carboxylation of biotin on its carrier protein (BCCP) and then the CO(2) group is transferred by the transcarboxylase to acetyl-CoA to form malonyl-CoA. This is Acetyl-coenzyme A carboxylase carboxyl transferase subunit beta from Streptococcus pyogenes serotype M49 (strain NZ131).